The sequence spans 467 residues: Dimethylamine methyltransferase MtbB2 (467 aa).

A non-standard amino acid (pyrrolysine) is located at residue Pyl356.

The protein belongs to the dimethylamine methyltransferase family.

It catalyses the reaction Co(I)-[dimethylamine-specific corrinoid protein] + dimethylamine + H(+) = methyl-Co(III)-[dimethylamine-specific corrinoid protein] + methylamine. It participates in one-carbon metabolism; methanogenesis from dimethylamine. Functionally, catalyzes the transfer of a methyl group from dimethylamine to the corrinoid cofactor of MtbC. The sequence is that of Dimethylamine methyltransferase MtbB2 (mtbB2) from Methanosarcina barkeri (strain Fusaro / DSM 804).